The following is a 193-amino-acid chain: Ion-translocating oxidoreductase complex subunit A (193 aa).

6 consecutive transmembrane segments (helical) span residues L5–L25, L39–I59, F62–A82, L102–L122, A134–I154, and S171–V191.

The protein belongs to the NqrDE/RnfAE family. In terms of assembly, the complex is composed of six subunits: RnfA, RnfB, RnfC, RnfD, RnfE and RnfG.

It is found in the cell inner membrane. In terms of biological role, part of a membrane-bound complex that couples electron transfer with translocation of ions across the membrane. The sequence is that of Ion-translocating oxidoreductase complex subunit A from Sodalis glossinidius (strain morsitans).